Here is a 413-residue protein sequence, read N- to C-terminus: Ribulose bisphosphate carboxylase/oxygenase activase, chloroplastic (413 aa).

The transit peptide at 1–54 directs the protein to the chloroplast; the sequence is MAATVSTIGAVNRTTLNNSNYGGLVPNSAFLGSRLKVSSRFTTSKMVTGNFKIV. 162–169 lines the ATP pocket; sequence GGKGQGKS.

It belongs to the RuBisCO activase family.

Its subcellular location is the plastid. The protein localises to the chloroplast stroma. In terms of biological role, activation of RuBisCO (ribulose-1,5-bisphosphate carboxylase/oxygenase; EC 4.1.1.39) involves the ATP-dependent carboxylation of the epsilon-amino group of lysine leading to a carbamate structure. This Cucumis sativus (Cucumber) protein is Ribulose bisphosphate carboxylase/oxygenase activase, chloroplastic.